We begin with the raw amino-acid sequence, 594 residues long: MARPKNVKYVFVTGGVVSSLGKGILSASLGMLLKSRGLRVAIQKYDPYINVDPGTMSPYQHGEVYVTDDGAETDLDLGHYERFLNESTSQASNLTMGRVYKSVIDKERRGAYLGGTVQVVPHVIDEIKDRLAELAKNGNYDVIITEIGGTIGDIESLPFLEAMRQMKLDMGDRNLLNIHLTFVPYIRAASELKTKPTQHSVKMLLETGIQPDILVCRSEKPLSSEIKRKVGHFCNVNNLDVIGLNDCDTIYEVPLTLLQEQLDLRVLKKLGLKKFKEPDLVYWREFCNKVKHPTSGEVTIVVCGKYTEYPDAYKSILEAFIHAGASNDVKVHVRLIGAEAAENEAYDFARELEGVHGILVAPGFGDRGIEGKVAFIRYAREQGIPFFGICLGMQCASVEFARNVCNLAEANSTEFNKRARYPVIDLMEQQKKVKEKGGTMRLGSYPCIIKEGTKANEVYGKFLINERHRHRFEFNNAYRETFEEHGMVFSGTSPNGELVEIIEIKDHPWFVAVQFHPELKSRVQAVHPLFHGFVGAAKSYAAVGHQPELAAIEPHFMPEPTAEAYAAYSEESSAESKSFFPDNGGHDEERDSGQ.

Residues 1–272 are amidoligase domain; that stretch reads MARPKNVKYV…DLRVLKKLGL (272 aa). Residue serine 18 coordinates CTP. Serine 18 serves as a coordination point for UTP. Residue 19 to 24 participates in ATP binding; sequence SLGKGI. Tyrosine 59 contacts L-glutamine. Aspartate 76 lines the ATP pocket. Mg(2+) contacts are provided by aspartate 76 and glutamate 146. CTP-binding positions include 153–155, 193–198, and lysine 229; these read DIE and KTKPTQ. UTP contacts are provided by residues 193–198 and lysine 229; that span reads KTKPTQ. Positions 299–543 constitute a Glutamine amidotransferase type-1 domain; the sequence is TIVVCGKYTE…VGAAKSYAAV (245 aa). Position 363 (glycine 363) interacts with L-glutamine. The active-site Nucleophile; for glutamine hydrolysis is cysteine 390. L-glutamine is bound by residues 391 to 394, glutamate 414, and arginine 471; that span reads LGMQ. Active-site residues include histidine 516 and glutamate 518. Residues 562–571 are compositionally biased toward low complexity; sequence AEAYAAYSEE. A disordered region spans residues 562–594; that stretch reads AEAYAAYSEESSAESKSFFPDNGGHDEERDSGQ. The span at 584-594 shows a compositional bias: basic and acidic residues; the sequence is GGHDEERDSGQ.

It belongs to the CTP synthase family. Homotetramer.

It catalyses the reaction UTP + L-glutamine + ATP + H2O = CTP + L-glutamate + ADP + phosphate + 2 H(+). The enzyme catalyses L-glutamine + H2O = L-glutamate + NH4(+). The catalysed reaction is UTP + NH4(+) + ATP = CTP + ADP + phosphate + 2 H(+). Its pathway is pyrimidine metabolism; CTP biosynthesis via de novo pathway; CTP from UDP: step 2/2. Allosterically activated by GTP, when glutamine is the substrate; GTP has no effect on the reaction when ammonia is the substrate. The allosteric effector GTP functions by stabilizing the protein conformation that binds the tetrahedral intermediate(s) formed during glutamine hydrolysis. Inhibited by the product CTP, via allosteric rather than competitive inhibition. In terms of biological role, catalyzes the ATP-dependent amination of UTP to CTP with either L-glutamine or ammonia as the source of nitrogen. Regulates intracellular CTP levels through interactions with the four ribonucleotide triphosphates. The sequence is that of CTP synthase from Chlorobium phaeovibrioides (strain DSM 265 / 1930) (Prosthecochloris vibrioformis (strain DSM 265)).